The chain runs to 478 residues: uncharacterized protein (478 aa).

The 119-residue stretch at 2–120 (MNMITVIGFG…NIDKIINILE (119 aa)) folds into the RCK N-terminal domain.

This is an uncharacterized protein from Methanocaldococcus jannaschii (strain ATCC 43067 / DSM 2661 / JAL-1 / JCM 10045 / NBRC 100440) (Methanococcus jannaschii).